Consider the following 215-residue polypeptide: Virulence protein YscR (215 aa).

The next 4 helical transmembrane spans lie at 10 to 30 (LIGI…GTSF), 53 to 73 (IALY…TLLA), 156 to 176 (IGLL…NILL), and 188 to 208 (ISLP…LTLA).

This sequence belongs to the FliP/MopC/SpaP family.

The protein localises to the cell membrane. This Salmonella typhimurium (strain LT2 / SGSC1412 / ATCC 700720) protein is Virulence protein YscR (yscR).